We begin with the raw amino-acid sequence, 869 residues long: MTNVTPMMQQYLKIKSQYQDCLLFFRLGDFYEMFFEDAKEASRVLEITLTKRDAKKENPIPMCGVPYHSAESYIETLINEGYKVAICEQMEDPKTTKGMVKREVIRVVTPGTIMNQGGMDEKQNNYILSFIKDGATIAVSYCDVSTGELKVTKFNDESMLLNEITTINPNEIVAADQVSESLKQQMSLATETITVVDEISNEAYEVNQVEDTLMHQAVQLLLDYIHHTQKRNMNHIEDAQVYEAIDYMKMDYYAKRNLELTESIRLKSKKGTLLWLMDETKTPMGARRLKQWIDRPLIYKQAINERLDAVSQLIDRFIERDTLRNYLNQVYDIERLVGRVSYGNVNARDLIQLKHSIAEIPNIKALLDDFDDALPEQFRQLEPLNDLLDLLEKSLVEEPPISVKDGGLFKQGFNQQLDEYLEASVNGKQWLAQLQAKERERTGIKSLKISFNKVFGYFIEITRANLKGFEPADFGYNRKQTLSNAERFITDELKEKEDIILGAEDKAVELEYQLFAQLREEVKAYTERLQKQAKLISEIDCLQSFAEIAQKYNYVRPEFSDDKTLDLVDSRHPVVERVMDYNDYVPNDCRLDDDQFIYLITGPNMSGKSTYMRQVAIISIMAQMGAYVPCGSAVLPIFDQIFTRIGAADDLVSGKSTFMVEMLEAQKALTYATEDSLIIFDEIGRGTSTFDGLALAQAMIEYVAETSHAKTLFSTHYHELTTLDQSLECLKNVHVAANEYQGELIFLHKVKDGAVDDSYGIQVAKLADLPDRVIERAQVILDAFEEKDKPQPQISHLQQTESFVREPEIEDIQDKKEPETEQFQQGAFDLFETPPVESEIEAELKKINISNMTPLQALNKLSELQNQLK.

ATP is bound at residue glycine 602 to serine 609.

The protein belongs to the DNA mismatch repair MutS family.

In terms of biological role, this protein is involved in the repair of mismatches in DNA. It is possible that it carries out the mismatch recognition step. This protein has a weak ATPase activity. The protein is DNA mismatch repair protein MutS of Staphylococcus carnosus (strain TM300).